The primary structure comprises 481 residues: uncharacterized protein (481 aa).

The disordered stretch occupies residues 1 to 28; that stretch reads MPQSNHYSHQSRSHNDRRRQQPDEKVQA. One can recognise a TRAM domain in the interval 29 to 87; sequence TVNIGQRFPLTIRRLGINGEGIGYYKHVITFVKGALPEEVVVAEVTAVHPRYLEAKIRS. Residues Gln-313, Tyr-342, Asp-363, and Asp-411 each coordinate S-adenosyl-L-methionine. The Nucleophile role is filled by Cys-438.

This sequence belongs to the class I-like SAM-binding methyltransferase superfamily. RNA M5U methyltransferase family.

This is an uncharacterized protein from Lactiplantibacillus plantarum (strain ATCC BAA-793 / NCIMB 8826 / WCFS1) (Lactobacillus plantarum).